We begin with the raw amino-acid sequence, 324 residues long: Acetyl-coenzyme A carboxylase carboxyl transferase subunit alpha (324 aa).

The 255-residue stretch at 37–291 (KLERRLDKLK…RDFILREWLR (255 aa)) folds into the CoA carboxyltransferase C-terminal domain.

It belongs to the AccA family. Acetyl-CoA carboxylase is a heterohexamer composed of biotin carboxyl carrier protein (AccB), biotin carboxylase (AccC) and two subunits each of ACCase subunit alpha (AccA) and ACCase subunit beta (AccD).

It is found in the cytoplasm. It catalyses the reaction N(6)-carboxybiotinyl-L-lysyl-[protein] + acetyl-CoA = N(6)-biotinyl-L-lysyl-[protein] + malonyl-CoA. The protein operates within lipid metabolism; malonyl-CoA biosynthesis; malonyl-CoA from acetyl-CoA: step 1/1. Its function is as follows. Component of the acetyl coenzyme A carboxylase (ACC) complex. First, biotin carboxylase catalyzes the carboxylation of biotin on its carrier protein (BCCP) and then the CO(2) group is transferred by the carboxyltransferase to acetyl-CoA to form malonyl-CoA. The polypeptide is Acetyl-coenzyme A carboxylase carboxyl transferase subunit alpha (Chlamydia abortus (strain DSM 27085 / S26/3) (Chlamydophila abortus)).